The sequence spans 97 residues: UPF0235 protein Daro_3887 (97 aa).

This sequence belongs to the UPF0235 family.

The protein is UPF0235 protein Daro_3887 of Dechloromonas aromatica (strain RCB).